A 429-amino-acid polypeptide reads, in one-letter code: Zinc metalloproteinase nas-17 (429 aa).

The first 21 residues, 1-21, serve as a signal peptide directing secretion; sequence MFLRPSTLLLTLFLALVAGSA. N54 is a glycosylation site (N-linked (GlcNAc...) asparagine). The Peptidase M12A domain occupies 62–251; it reads RQITKIWKKW…VNINVRYSCG (190 aa). Intrachain disulfides connect C104–C250, C125–C144, C252–C272, and C274–C283. H152 provides a ligand contact to Zn(2+). The active site involves E153. Zn(2+) contacts are provided by H156 and H162. In terms of domain architecture, EGF-like spans 245–284; that stretch reads NVRYSCGCAKSLTCENGGYTNPSNCATCVCPTGFAGTLCN.

The cofactor is Zn(2+).

It localises to the secreted. In terms of biological role, metalloprotease. The protein is Zinc metalloproteinase nas-17 (nas-17) of Caenorhabditis elegans.